The sequence spans 778 residues: Degenerin deg-1 (778 aa).

Topologically, residues 1 to 82 (MSNHHSKTKK…IARNSFSKLM (82 aa)) are cytoplasmic. The chain crosses the membrane as a helical span at residues 83–103 (WGLIIFSFLLMFAYQASKLIF). Residues 104-711 (KFSAHEKITD…LVNLIADFGG (608 aa)) lie on the Extracellular side of the membrane. Residues 154–165 (NAKTHSKSEGEK) are compositionally biased toward basic and acidic residues. Disordered regions lie at residues 154-180 (NAKT…DASQ) and 201-220 (SNKT…QRSI). Residues Asn-202, Asn-209, Asn-272, and Asn-342 are each glycosylated (N-linked (GlcNAc...) asparagine). The span at 346–369 (TSTTTTTTTTPPPTTTSTTTTTTT) shows a compositional bias: low complexity. The tract at residues 346 to 380 (TSTTTTTTTTPPPTTTSTTTTTTTTPPPTTTARPN) is disordered. N-linked (GlcNAc...) asparagine glycans are attached at residues Asn-473, Asn-492, and Asn-606. Residues 712–732 (HLGLWLGFSVITVMEVCVLLV) form a helical membrane-spanning segment. Over 733 to 778 (DMISLFFKSRHEEKLLRQSTKRKDVPEDKRQITVGSGRKSDAFVSI) the chain is Cytoplasmic.

Belongs to the amiloride-sensitive sodium channel (TC 1.A.6) family.

It is found in the membrane. Its function is as follows. Probable sodium channel subunit. Required by a subset of neurons. The polypeptide is Degenerin deg-1 (Caenorhabditis elegans).